The chain runs to 448 residues: Asparagine--tRNA ligase (448 aa).

It belongs to the class-II aminoacyl-tRNA synthetase family. In terms of assembly, homodimer.

Its subcellular location is the cytoplasm. The enzyme catalyses tRNA(Asn) + L-asparagine + ATP = L-asparaginyl-tRNA(Asn) + AMP + diphosphate + H(+). This is Asparagine--tRNA ligase from Streptococcus suis (strain 98HAH33).